The following is a 326-amino-acid chain: Target of rapamycin complex subunit lst8 (326 aa).

WD repeat units follow at residues Met1–Thr37, His40–Asn80, Gly83–Gln122, Gln126–Leu165, Glu168–Leu207, Ala218–Glu257, and Thr268–Ser309.

It belongs to the WD repeat LST8 family. As to quaternary structure, part of the mechanistic target of rapamycin complex 1 (mTORC1) which contains MTOR, MLST8 and RPTOR. Component of the mechanistic target of rapamycin complex 2 (mTORC2), consisting in two heterotretramers composed of MTOR, MLST8, RICTOR and MAPKAP1/SIN1.

It localises to the lysosome membrane. The protein resides in the cytoplasm. Functionally, subunit of both mTORC1 and mTORC2, which regulates cell growth and survival in response to nutrient and hormonal signals. mTORC1 is activated in response to growth factors or amino acids. In response to nutrients, mTORC1 is recruited to the lysosome membrane and promotes protein, lipid and nucleotide synthesis by phosphorylating several substrates, such as ribosomal protein S6 kinase (RPS6KB1 and RPS6KB2) and EIF4EBP1 (4E-BP1). In the same time, it inhibits catabolic pathways by phosphorylating the autophagy initiation components ULK1 and ATG13, as well as transcription factor TFEB, a master regulators of lysosomal biogenesis and autophagy. The mTORC1 complex is inhibited in response to starvation and amino acid depletion. Within mTORC1, MLST8 interacts directly with MTOR and enhances its kinase activity. In nutrient-poor conditions, stabilizes the MTOR-RPTOR interaction and favors RPTOR-mediated inhibition of MTOR activity. As part of the mTORC2 complex, transduces signals from growth factors to pathways involved in proliferation, cytoskeletal organization, lipogenesis and anabolic output. mTORC2 is also activated by growth factors, but seems to be nutrient-insensitive. In response to growth factors, mTORC2 phosphorylates and activates AGC protein kinase family members, including AKT (AKT1, AKT2 and AKT3), PKC (PRKCA, PRKCB and PRKCE) and SGK1. mTORC2 functions upstream of Rho GTPases to regulate the actin cytoskeleton, probably by activating one or more Rho-type guanine nucleotide exchange factors. mTORC2 promotes the serum-induced formation of stress-fibers or F-actin. Within mTORC2, MLST8 acts as a bridge between MAPKAP1/SIN1 and MTOR. In Xenopus tropicalis (Western clawed frog), this protein is Target of rapamycin complex subunit lst8 (mlst8).